The primary structure comprises 330 residues: D-lactate dehydrogenase (330 aa).

Residues 156–157 (RI), Asp-176, 206–207 (VP), 233–235 (AAR), and Asp-259 each bind NAD(+). Arg-235 is a catalytic residue. Glu-264 is a catalytic residue. Residue His-296 is the Proton donor of the active site.

It belongs to the D-isomer specific 2-hydroxyacid dehydrogenase family.

The enzyme catalyses (R)-lactate + NAD(+) = pyruvate + NADH + H(+). This chain is D-lactate dehydrogenase (ldhD), found in Staphylococcus aureus (strain MSSA476).